The sequence spans 868 residues: Leucine--tRNA ligase (868 aa).

The 'HIGH' region signature appears at 42 to 52; it reads PYPSGKLHMGH. The 'KMSKS' region motif lies at 627–631; the sequence is KMSKS. Lys630 is a binding site for ATP.

Belongs to the class-I aminoacyl-tRNA synthetase family.

It is found in the cytoplasm. The enzyme catalyses tRNA(Leu) + L-leucine + ATP = L-leucyl-tRNA(Leu) + AMP + diphosphate. The polypeptide is Leucine--tRNA ligase (Pseudomonas syringae pv. syringae (strain B728a)).